The following is a 481-amino-acid chain: Aspartyl/glutamyl-tRNA(Asn/Gln) amidotransferase subunit B (481 aa).

This sequence belongs to the GatB/GatE family. GatB subfamily. In terms of assembly, heterotrimer of A, B and C subunits.

It carries out the reaction L-glutamyl-tRNA(Gln) + L-glutamine + ATP + H2O = L-glutaminyl-tRNA(Gln) + L-glutamate + ADP + phosphate + H(+). The enzyme catalyses L-aspartyl-tRNA(Asn) + L-glutamine + ATP + H2O = L-asparaginyl-tRNA(Asn) + L-glutamate + ADP + phosphate + 2 H(+). Its function is as follows. Allows the formation of correctly charged Asn-tRNA(Asn) or Gln-tRNA(Gln) through the transamidation of misacylated Asp-tRNA(Asn) or Glu-tRNA(Gln) in organisms which lack either or both of asparaginyl-tRNA or glutaminyl-tRNA synthetases. The reaction takes place in the presence of glutamine and ATP through an activated phospho-Asp-tRNA(Asn) or phospho-Glu-tRNA(Gln). The chain is Aspartyl/glutamyl-tRNA(Asn/Gln) amidotransferase subunit B from Ehrlichia ruminantium (strain Gardel).